The chain runs to 542 residues: Glutamyl-tRNA(Gln) amidotransferase subunit B, mitochondrial (542 aa).

It belongs to the GatB/GatE family. GatB subfamily. In terms of assembly, subunit of the heterotrimeric GatFAB amidotransferase (AdT) complex, composed of A, B and F subunits.

The protein resides in the mitochondrion. It catalyses the reaction L-glutamyl-tRNA(Gln) + L-glutamine + ATP + H2O = L-glutaminyl-tRNA(Gln) + L-glutamate + ADP + phosphate + H(+). Allows the formation of correctly charged Gln-tRNA(Gln) through the transamidation of misacylated Glu-tRNA(Gln) in the mitochondria. The reaction takes place in the presence of glutamine and ATP through an activated gamma-phospho-Glu-tRNA(Gln). The sequence is that of Glutamyl-tRNA(Gln) amidotransferase subunit B, mitochondrial from Candida glabrata (strain ATCC 2001 / BCRC 20586 / JCM 3761 / NBRC 0622 / NRRL Y-65 / CBS 138) (Yeast).